We begin with the raw amino-acid sequence, 122 residues long: Large ribosomal subunit protein uL18 (122 aa).

Belongs to the universal ribosomal protein uL18 family. As to quaternary structure, part of the 50S ribosomal subunit; part of the 5S rRNA/L5/L18/L25 subcomplex. Contacts the 5S and 23S rRNAs.

In terms of biological role, this is one of the proteins that bind and probably mediate the attachment of the 5S RNA into the large ribosomal subunit, where it forms part of the central protuberance. In Mycobacterium avium (strain 104), this protein is Large ribosomal subunit protein uL18.